Reading from the N-terminus, the 613-residue chain is tRNA 5-methylaminomethyl-2-thiouridine biosynthesis bifunctional protein MnmC (613 aa).

The segment at 1–225 (MKKAKLIFKD…KREMIKAYLE (225 aa)) is tRNA (mnm(5)s(2)U34)-methyltransferase. Residues 252-613 (IGAGISSAVL…FLVRKLKKGL (362 aa)) form an FAD-dependent cmnm(5)s(2)U34 oxidoreductase region.

In the N-terminal section; belongs to the methyltransferase superfamily. tRNA (mnm(5)s(2)U34)-methyltransferase family. The protein in the C-terminal section; belongs to the DAO family. Requires FAD as cofactor.

The protein localises to the cytoplasm. It catalyses the reaction 5-aminomethyl-2-thiouridine(34) in tRNA + S-adenosyl-L-methionine = 5-methylaminomethyl-2-thiouridine(34) in tRNA + S-adenosyl-L-homocysteine + H(+). Catalyzes the last two steps in the biosynthesis of 5-methylaminomethyl-2-thiouridine (mnm(5)s(2)U) at the wobble position (U34) in tRNA. Catalyzes the FAD-dependent demodification of cmnm(5)s(2)U34 to nm(5)s(2)U34, followed by the transfer of a methyl group from S-adenosyl-L-methionine to nm(5)s(2)U34, to form mnm(5)s(2)U34. This Campylobacter jejuni subsp. doylei (strain ATCC BAA-1458 / RM4099 / 269.97) protein is tRNA 5-methylaminomethyl-2-thiouridine biosynthesis bifunctional protein MnmC.